The following is an 82-amino-acid chain: Turripeptide Lol6.1 (82 aa).

Residues 1 to 23 (MRFHWIPTLTVLLVLSMSFGTEA) form the signal peptide. Residues 24-48 (IPXXXXXXXXXXXXXXXXXXXXXXX) constitute a propeptide that is removed on maturation. Disulfide bonds link Cys54/Cys66, Cys58/Cys71, and Cys65/Cys77.

As to expression, expressed by the venom duct.

It is found in the secreted. Functionally, acts as a neurotoxin by inhibiting an ion channel. This Iotyrris olangoensis (Sea snail) protein is Turripeptide Lol6.1.